The chain runs to 402 residues: NADH-quinone oxidoreductase subunit D (402 aa).

The protein belongs to the complex I 49 kDa subunit family. NDH-1 is composed of 14 different subunits. Subunits NuoB, C, D, E, F, and G constitute the peripheral sector of the complex.

The protein localises to the cell inner membrane. The enzyme catalyses a quinone + NADH + 5 H(+)(in) = a quinol + NAD(+) + 4 H(+)(out). In terms of biological role, NDH-1 shuttles electrons from NADH, via FMN and iron-sulfur (Fe-S) centers, to quinones in the respiratory chain. The immediate electron acceptor for the enzyme in this species is believed to be ubiquinone. Couples the redox reaction to proton translocation (for every two electrons transferred, four hydrogen ions are translocated across the cytoplasmic membrane), and thus conserves the redox energy in a proton gradient. This is NADH-quinone oxidoreductase subunit D from Nitrobacter winogradskyi (strain ATCC 25391 / DSM 10237 / CIP 104748 / NCIMB 11846 / Nb-255).